Reading from the N-terminus, the 136-residue chain is Large-conductance mechanosensitive channel (136 aa).

A run of 2 helical transmembrane segments spans residues 9 to 29 (AFASRGNVIDMAVGIIIGAAF) and 79 to 99 (IQTIIDFTIIAFAIFMGLKAI).

Belongs to the MscL family. In terms of assembly, homopentamer.

The protein localises to the cell inner membrane. Channel that opens in response to stretch forces in the membrane lipid bilayer. May participate in the regulation of osmotic pressure changes within the cell. The chain is Large-conductance mechanosensitive channel from Shewanella sp. (strain ANA-3).